We begin with the raw amino-acid sequence, 264 residues long: Thymidylate synthase (264 aa).

DUMP is bound at residue R21. Position 51 (H51) interacts with (6R)-5,10-methylene-5,6,7,8-tetrahydrofolate. R126–R127 is a dUMP binding site. The Nucleophile role is filled by C146. Residues R166–D169, N177, and H207–Y209 contribute to the dUMP site. D169 is a (6R)-5,10-methylene-5,6,7,8-tetrahydrofolate binding site. S263 contributes to the (6R)-5,10-methylene-5,6,7,8-tetrahydrofolate binding site.

Belongs to the thymidylate synthase family. Bacterial-type ThyA subfamily. As to quaternary structure, homodimer.

The protein resides in the cytoplasm. The catalysed reaction is dUMP + (6R)-5,10-methylene-5,6,7,8-tetrahydrofolate = 7,8-dihydrofolate + dTMP. It participates in pyrimidine metabolism; dTTP biosynthesis. Functionally, catalyzes the reductive methylation of 2'-deoxyuridine-5'-monophosphate (dUMP) to 2'-deoxythymidine-5'-monophosphate (dTMP) while utilizing 5,10-methylenetetrahydrofolate (mTHF) as the methyl donor and reductant in the reaction, yielding dihydrofolate (DHF) as a by-product. This enzymatic reaction provides an intracellular de novo source of dTMP, an essential precursor for DNA biosynthesis. The protein is Thymidylate synthase of Phocaeicola vulgatus (strain ATCC 8482 / DSM 1447 / JCM 5826 / CCUG 4940 / NBRC 14291 / NCTC 11154) (Bacteroides vulgatus).